Here is a 573-residue protein sequence, read N- to C-terminus: Maestro heat-like repeat-containing protein family member 9 (573 aa).

HEAT repeat units lie at residues 118–155, 252–289, 292–328, 357–394, and 418–458; these read LYKL…FTVT, PLLT…FHAE, TMVS…TSPK, SVAP…ITNL, and QYFP…LLNC.

This is Maestro heat-like repeat-containing protein family member 9 (MROH9) from Homo sapiens (Human).